The chain runs to 299 residues: MSQVQSGILPEHCRAAIWIEANVKGEVDALRAASKTFADKLATFEAKFPDAHLGAVVAFGNNTWRALSGGVGAEELKDFPGYGKGLAPTTQFDVLIHILSLRHDVNFSVAQAAMEAFGDCIEVKEEIHGFRWVEERDLSGFVDGTENPAGEETRREVAVIKDGVDAGGSYVFVQRWEHNLKQLNRMSVHDQEMVIGRTKEANEEIDGDERPETSHLTRVDLKEDGKGLKIVRQSLPYGTASGTHGLYFCAYCARLHNIEQQLLSMFGDTDGKRDAMLRFTKPVTGGYYFAPSLDKLMAL.

D143 (proton acceptor) is an active-site residue. H215 is a heme binding site.

The protein belongs to the DyP-type peroxidase family. The cofactor is heme b.

Its subcellular location is the cytoplasm. Functionally, has both general peroxidase activity and dye-decolorizing activity. Can catalyze the oxidation of both protoporphyrinogen IX and coproporphyrinogen III to their corresponding porphyrins. Also efficiently decolorizes the dyes alizarin red and Cibacron blue F3GA. This chain is Dye-decolorizing peroxidase YfeX (yfeX), found in Escherichia coli (strain K12).